Consider the following 1439-residue polypeptide: Receptor-type tyrosine-protein phosphatase kappa (1439 aa).

The signal sequence occupies residues 1 to 26; sequence MDTTAAAALPAFVALLLLSPWPLLGS. The Extracellular segment spans residues 27 to 752; sequence AQGQFSAGGC…PAKQTDRVVK (726 aa). Residues 31 to 194 enclose the MAM domain; sequence FSAGGCTFDD…IQVLSYPCDK (164 aa). Asn101, Asn140, and Asn211 each carry an N-linked (GlcNAc...) asparagine glycan. In terms of domain architecture, Ig-like C2-type spans 196–281; that stretch reads PHFLRLGDVE…TQSERGSGVS (86 aa). Cys216 and Cys270 form a disulfide bridge. 4 consecutive Fibronectin type-III domains span residues 294 to 389, 392 to 488, 491 to 595, and 597 to 680; these read PIAP…CAEP, TPKT…TDED, GPVP…SAPT, and PDYE…GNLP. N-linked (GlcNAc...) asparagine glycans are attached at residues Asn416, Asn424, Asn436, Asn462, Asn552, Asn586, Asn590, Asn607, and Asn690. Residues 753-774 traverse the membrane as a helical segment; it reads IAGISAGILVFILLLLVVILIV. Topologically, residues 775–1439 are cytoplasmic; that stretch reads KKSKLAKKRK…DVALEYLESS (665 aa). Ser856 is subject to Phosphoserine. Tyrosine-protein phosphatase domains are found at residues 887-1141 and 1173-1435; these read FKEE…ILEA and LKDE…ALEY. Substrate contacts are provided by residues Asp1050, 1082–1088, and Gln1126; that span reads CSAGAGR. The active-site Phosphocysteine intermediate is the Cys1082. Residue Cys1376 is the Phosphocysteine intermediate of the active site.

The protein belongs to the protein-tyrosine phosphatase family. Receptor class 2B subfamily. Post-translationally, this protein undergoes proteolytic processing. High levels in lung, brain and colon; less in liver, pancreas, stomach, kidney, placenta and mammary carcinoma.

It is found in the cell junction. The protein resides in the adherens junction. The protein localises to the cell membrane. The catalysed reaction is O-phospho-L-tyrosyl-[protein] + H2O = L-tyrosyl-[protein] + phosphate. Functionally, regulation of processes involving cell contact and adhesion such as growth control, tumor invasion, and metastasis. Negative regulator of EGFR signaling pathway. Forms complexes with beta-catenin and gamma-catenin/plakoglobin. Beta-catenin may be a substrate for the catalytic activity of PTPRK/PTP-kappa. The sequence is that of Receptor-type tyrosine-protein phosphatase kappa (PTPRK) from Homo sapiens (Human).